The primary structure comprises 342 residues: Farnesyl pyrophosphate synthase 2 (342 aa).

Isopentenyl diphosphate contacts are provided by Lys-47, Arg-50, and Gln-86. Asp-93 and Asp-97 together coordinate Mg(2+). Arg-102 lines the dimethylallyl diphosphate pocket. Position 103 (Arg-103) interacts with isopentenyl diphosphate. Dimethylallyl diphosphate-binding residues include Lys-190, Thr-191, Gln-229, Lys-246, and Lys-255.

Belongs to the FPP/GGPP synthase family. It depends on Mg(2+) as a cofactor.

Its subcellular location is the cytoplasm. The catalysed reaction is isopentenyl diphosphate + dimethylallyl diphosphate = (2E)-geranyl diphosphate + diphosphate. It catalyses the reaction isopentenyl diphosphate + (2E)-geranyl diphosphate = (2E,6E)-farnesyl diphosphate + diphosphate. It functions in the pathway isoprenoid biosynthesis; farnesyl diphosphate biosynthesis; farnesyl diphosphate from geranyl diphosphate and isopentenyl diphosphate: step 1/1. The protein operates within isoprenoid biosynthesis; geranyl diphosphate biosynthesis; geranyl diphosphate from dimethylallyl diphosphate and isopentenyl diphosphate: step 1/1. Functionally, catalyzes the sequential condensation of isopentenyl pyrophosphate with the allylic pyrophosphates, dimethylallyl pyrophosphate, and then with the resultant geranylpyrophosphate to the ultimate product farnesyl pyrophosphate. The chain is Farnesyl pyrophosphate synthase 2 (FPS2) from Arabidopsis thaliana (Mouse-ear cress).